The chain runs to 72 residues: Translation initiation factor IF-1 (72 aa).

An S1-like domain is found at 2-72 (AKEDCIEMQG…SKGRIIFRSR (71 aa)).

The protein belongs to the IF-1 family. As to quaternary structure, component of the 30S ribosomal translation pre-initiation complex which assembles on the 30S ribosome in the order IF-2 and IF-3, IF-1 and N-formylmethionyl-tRNA(fMet); mRNA recruitment can occur at any time during PIC assembly.

The protein resides in the cytoplasm. Its function is as follows. One of the essential components for the initiation of protein synthesis. Stabilizes the binding of IF-2 and IF-3 on the 30S subunit to which N-formylmethionyl-tRNA(fMet) subsequently binds. Helps modulate mRNA selection, yielding the 30S pre-initiation complex (PIC). Upon addition of the 50S ribosomal subunit IF-1, IF-2 and IF-3 are released leaving the mature 70S translation initiation complex. The polypeptide is Translation initiation factor IF-1 (Haemophilus influenzae (strain ATCC 51907 / DSM 11121 / KW20 / Rd)).